The chain runs to 334 residues: Glycerol-1-phosphate dehydrogenase [NAD(P)+] (334 aa).

NAD(+)-binding positions include 77-81 and 99-102; these read GRPID and TTAS. D104 contacts substrate. Position 108 (S108) interacts with NAD(+). Residue D147 coordinates substrate. Zn(2+)-binding residues include D147 and H225. H229 is a binding site for substrate. Position 246 (H246) interacts with Zn(2+).

This sequence belongs to the glycerol-1-phosphate dehydrogenase family. Zn(2+) is required as a cofactor.

Its subcellular location is the cytoplasm. The enzyme catalyses sn-glycerol 1-phosphate + NAD(+) = dihydroxyacetone phosphate + NADH + H(+). It catalyses the reaction sn-glycerol 1-phosphate + NADP(+) = dihydroxyacetone phosphate + NADPH + H(+). It participates in membrane lipid metabolism; glycerophospholipid metabolism. Its function is as follows. Catalyzes the NAD(P)H-dependent reduction of dihydroxyacetonephosphate (DHAP or glycerone phosphate) to glycerol 1-phosphate (G1P). The G1P thus generated is used as the glycerophosphate backbone of phospholipids in the cellular membranes of Archaea. The sequence is that of Glycerol-1-phosphate dehydrogenase [NAD(P)+] from Methanococcus maripaludis (strain C5 / ATCC BAA-1333).